We begin with the raw amino-acid sequence, 492 residues long: Glutamyl-tRNA(Gln) amidotransferase subunit A (492 aa).

Active-site charge relay system residues include K78 and S158. The Acyl-ester intermediate role is filled by S182.

It belongs to the amidase family. GatA subfamily. Heterotrimer of A, B and C subunits.

The catalysed reaction is L-glutamyl-tRNA(Gln) + L-glutamine + ATP + H2O = L-glutaminyl-tRNA(Gln) + L-glutamate + ADP + phosphate + H(+). Its function is as follows. Allows the formation of correctly charged Gln-tRNA(Gln) through the transamidation of misacylated Glu-tRNA(Gln) in organisms which lack glutaminyl-tRNA synthetase. The reaction takes place in the presence of glutamine and ATP through an activated gamma-phospho-Glu-tRNA(Gln). This chain is Glutamyl-tRNA(Gln) amidotransferase subunit A, found in Rhodopseudomonas palustris (strain ATCC BAA-98 / CGA009).